The primary structure comprises 382 residues: Dodecanoyl-[acyl-carrier-protein] hydrolase, chloroplastic (382 aa).

Residues 1-83 (MATTSLASAF…FSAAEKQWTN (83 aa)) constitute a chloroplast transit peptide. Residues asparagine 283, histidine 285, and cysteine 320 contribute to the active site.

It belongs to the acyl-ACP thioesterase family. As to quaternary structure, forms homodimers. In terms of tissue distribution, expressed in developing cotyledons. Not detected in leaves.

The protein resides in the plastid. It is found in the chloroplast. It catalyses the reaction dodecanoyl-[ACP] + H2O = dodecanoate + holo-[ACP] + H(+). In terms of biological role, plays an essential role in chain termination during de novo fatty acid synthesis. High thioesterase activity for lauroyl-ACP versus other acyl-ACPs. The polypeptide is Dodecanoyl-[acyl-carrier-protein] hydrolase, chloroplastic (Umbellularia californica (California bay laurel)).